A 565-amino-acid chain; its full sequence is Hemagglutinin-neuraminidase (565 aa).

Residues 1 to 19 lie on the Intravirion side of the membrane; sequence MVAEDAPVRGTCRVLFRTT. A helical transmembrane segment spans residues 20-40; the sequence is TLLFLCTLLSLSISILYESLI. Residues 41-565 lie on the Virion surface side of the membrane; the sequence is TQNQIMSQAG…VPFIRQVTLS (525 aa). Asparagine 110 and asparagine 139 each carry an N-linked (GlcNAc...) asparagine; by host glycan. Disulfide bonds link cysteine 161–cysteine 185, cysteine 175–cysteine 236, and cysteine 227–cysteine 240. The involved in neuraminidase activity stretch occupies residues 223 to 228; the sequence is NRKSCS. N-linked (GlcNAc...) asparagine; by host glycosylation is present at asparagine 267. 3 cysteine pairs are disulfide-bonded: cysteine 333–cysteine 454, cysteine 365–cysteine 375, and cysteine 448–cysteine 458. An N-linked (GlcNAc...) asparagine; by host glycan is attached at asparagine 504. A disulfide bond links cysteine 528 and cysteine 539.

The protein belongs to the paramyxoviruses hemagglutinin-neuraminidase family. In terms of assembly, homotetramer; composed of disulfide-linked homodimers. Interacts with F protein trimer.

The protein localises to the virion membrane. It is found in the host cell membrane. It catalyses the reaction Hydrolysis of alpha-(2-&gt;3)-, alpha-(2-&gt;6)-, alpha-(2-&gt;8)- glycosidic linkages of terminal sialic acid residues in oligosaccharides, glycoproteins, glycolipids, colominic acid and synthetic substrates.. In terms of biological role, attaches the virus to sialic acid-containing cell receptors and thereby initiating infection. Binding of HN protein to the receptor induces a conformational change that allows the F protein to trigger virion/cell membranes fusion. Functionally, neuraminidase activity ensures the efficient spread of the virus by dissociating the mature virions from the neuraminic acid containing glycoproteins. This chain is Hemagglutinin-neuraminidase (HN), found in Canis lupus familiaris (Dog).